We begin with the raw amino-acid sequence, 166 residues long: Crossover junction endodeoxyribonuclease RuvC (166 aa).

Active-site residues include D11, E70, and D142. Residues D11, E70, and D142 each contribute to the Mg(2+) site.

Belongs to the RuvC family. In terms of assembly, homodimer which binds Holliday junction (HJ) DNA. The HJ becomes 2-fold symmetrical on binding to RuvC with unstacked arms; it has a different conformation from HJ DNA in complex with RuvA. In the full resolvosome a probable DNA-RuvA(4)-RuvB(12)-RuvC(2) complex forms which resolves the HJ. Mg(2+) serves as cofactor.

It localises to the cytoplasm. It carries out the reaction Endonucleolytic cleavage at a junction such as a reciprocal single-stranded crossover between two homologous DNA duplexes (Holliday junction).. The RuvA-RuvB-RuvC complex processes Holliday junction (HJ) DNA during genetic recombination and DNA repair. Endonuclease that resolves HJ intermediates. Cleaves cruciform DNA by making single-stranded nicks across the HJ at symmetrical positions within the homologous arms, yielding a 5'-phosphate and a 3'-hydroxyl group; requires a central core of homology in the junction. The consensus cleavage sequence is 5'-(A/T)TT(C/G)-3'. Cleavage occurs on the 3'-side of the TT dinucleotide at the point of strand exchange. HJ branch migration catalyzed by RuvA-RuvB allows RuvC to scan DNA until it finds its consensus sequence, where it cleaves and resolves the cruciform DNA. This Nitratidesulfovibrio vulgaris (strain ATCC 29579 / DSM 644 / CCUG 34227 / NCIMB 8303 / VKM B-1760 / Hildenborough) (Desulfovibrio vulgaris) protein is Crossover junction endodeoxyribonuclease RuvC.